Consider the following 162-residue polypeptide: Large ribosomal subunit protein uL15 (162 aa).

The segment covering 1 to 10 (MNLNELRDNA) has biased composition (basic and acidic residues). The segment at 1–39 (MNLNELRDNAGSRYRKKRLGRGIGSGKGKTSGKGVKGQK) is disordered. Residues 21 to 35 (RGIGSGKGKTSGKGV) show a composition bias toward gly residues.

It belongs to the universal ribosomal protein uL15 family. Part of the 50S ribosomal subunit.

In terms of biological role, binds to the 23S rRNA. This is Large ribosomal subunit protein uL15 from Gluconacetobacter diazotrophicus (strain ATCC 49037 / DSM 5601 / CCUG 37298 / CIP 103539 / LMG 7603 / PAl5).